The following is a 482-amino-acid chain: ATP synthase subunit beta (482 aa).

161-168 (GGAGVGKT) is a binding site for ATP.

Belongs to the ATPase alpha/beta chains family. In terms of assembly, F-type ATPases have 2 components, CF(1) - the catalytic core - and CF(0) - the membrane proton channel. CF(1) has five subunits: alpha(3), beta(3), gamma(1), delta(1), epsilon(1). CF(0) has three main subunits: a(1), b(2) and c(9-12). The alpha and beta chains form an alternating ring which encloses part of the gamma chain. CF(1) is attached to CF(0) by a central stalk formed by the gamma and epsilon chains, while a peripheral stalk is formed by the delta and b chains.

The protein resides in the cell inner membrane. The catalysed reaction is ATP + H2O + 4 H(+)(in) = ADP + phosphate + 5 H(+)(out). Produces ATP from ADP in the presence of a proton gradient across the membrane. The catalytic sites are hosted primarily by the beta subunits. The protein is ATP synthase subunit beta of Solibacter usitatus (strain Ellin6076).